We begin with the raw amino-acid sequence, 451 residues long: Serine--tRNA ligase (451 aa).

L-serine is bound at residue 258 to 260; sequence TSE. 289–291 contacts ATP; sequence RSE. Glu-312 is a binding site for L-serine. 376-379 is a binding site for ATP; that stretch reads EISS. Ser-411 serves as a coordination point for L-serine.

It belongs to the class-II aminoacyl-tRNA synthetase family. Type-1 seryl-tRNA synthetase subfamily. In terms of assembly, homodimer. The tRNA molecule binds across the dimer.

Its subcellular location is the cytoplasm. The enzyme catalyses tRNA(Ser) + L-serine + ATP = L-seryl-tRNA(Ser) + AMP + diphosphate + H(+). It carries out the reaction tRNA(Sec) + L-serine + ATP = L-seryl-tRNA(Sec) + AMP + diphosphate + H(+). It participates in aminoacyl-tRNA biosynthesis; selenocysteinyl-tRNA(Sec) biosynthesis; L-seryl-tRNA(Sec) from L-serine and tRNA(Sec): step 1/1. Its function is as follows. Catalyzes the attachment of serine to tRNA(Ser). Is also able to aminoacylate tRNA(Sec) with serine, to form the misacylated tRNA L-seryl-tRNA(Sec), which will be further converted into selenocysteinyl-tRNA(Sec). The protein is Serine--tRNA ligase of Bordetella pertussis (strain Tohama I / ATCC BAA-589 / NCTC 13251).